Reading from the N-terminus, the 415-residue chain is Citrate (Re)-synthase (415 aa).

A Pyruvate carboxyltransferase domain is found at 4-275 (IFIIDVTNRD…GHEVDLSKAW (272 aa)).

Belongs to the alpha-IPM synthase/homocitrate synthase family. It depends on Mn(2+) as a cofactor.

The enzyme catalyses oxaloacetate + acetyl-CoA + H2O = citrate + CoA + H(+). Inhibited by citrate and under aerobic conditions. Functionally, catalyzes the condensation of the acetyl group of acetyl coenzyme A (acetyl-CoA) with oxaloacetate to form citrate. This enzyme is highly Re-face stereospecific with respect to the C-2 of oxaloacetate. This is Citrate (Re)-synthase from Dehalococcoides mccartyi (strain CBDB1).